The chain runs to 20 residues: Unknown protein NF015 from 2D-PAGE (20 aa).

The tract at residues 1–20 is disordered; sequence TPQIQKPAPQFSKTALLPDE.

The polypeptide is Unknown protein NF015 from 2D-PAGE (Naegleria fowleri (Brain eating amoeba)).